The primary structure comprises 395 residues: ATP phosphoribosyltransferase regulatory subunit (395 aa).

The protein belongs to the class-II aminoacyl-tRNA synthetase family. HisZ subfamily. As to quaternary structure, heteromultimer composed of HisG and HisZ subunits.

It is found in the cytoplasm. It participates in amino-acid biosynthesis; L-histidine biosynthesis; L-histidine from 5-phospho-alpha-D-ribose 1-diphosphate: step 1/9. Functionally, required for the first step of histidine biosynthesis. May allow the feedback regulation of ATP phosphoribosyltransferase activity by histidine. This Pseudomonas fluorescens (strain ATCC BAA-477 / NRRL B-23932 / Pf-5) protein is ATP phosphoribosyltransferase regulatory subunit.